Reading from the N-terminus, the 951-residue chain is Glycine dehydrogenase (decarboxylating) (951 aa).

Lysine 709 is subject to N6-(pyridoxal phosphate)lysine.

The protein belongs to the GcvP family. As to quaternary structure, the glycine cleavage system is composed of four proteins: P, T, L and H. The cofactor is pyridoxal 5'-phosphate.

The enzyme catalyses N(6)-[(R)-lipoyl]-L-lysyl-[glycine-cleavage complex H protein] + glycine + H(+) = N(6)-[(R)-S(8)-aminomethyldihydrolipoyl]-L-lysyl-[glycine-cleavage complex H protein] + CO2. The glycine cleavage system catalyzes the degradation of glycine. The P protein binds the alpha-amino group of glycine through its pyridoxal phosphate cofactor; CO(2) is released and the remaining methylamine moiety is then transferred to the lipoamide cofactor of the H protein. The sequence is that of Glycine dehydrogenase (decarboxylating) from Gluconobacter oxydans (strain 621H) (Gluconobacter suboxydans).